The sequence spans 248 residues: 2,3-bisphosphoglycerate-dependent phosphoglycerate mutase (248 aa).

Substrate contacts are provided by residues 8–15, 21–22, Arg60, 87–90, Lys98, 114–115, and 183–184; these read RHGESAWN, TG, EKHY, RR, and GN. His9 functions as the Tele-phosphohistidine intermediate in the catalytic mechanism. The Proton donor/acceptor role is filled by Glu87.

It belongs to the phosphoglycerate mutase family. BPG-dependent PGAM subfamily.

It catalyses the reaction (2R)-2-phosphoglycerate = (2R)-3-phosphoglycerate. It participates in carbohydrate degradation; glycolysis; pyruvate from D-glyceraldehyde 3-phosphate: step 3/5. Catalyzes the interconversion of 2-phosphoglycerate and 3-phosphoglycerate. The polypeptide is 2,3-bisphosphoglycerate-dependent phosphoglycerate mutase (Bacteroides fragilis (strain ATCC 25285 / DSM 2151 / CCUG 4856 / JCM 11019 / LMG 10263 / NCTC 9343 / Onslow / VPI 2553 / EN-2)).